We begin with the raw amino-acid sequence, 222 residues long: tRNA (guanine-N(1)-)-methyltransferase (222 aa).

S-adenosyl-L-methionine is bound by residues G112 and 132–137 (IGDYVL).

Belongs to the RNA methyltransferase TrmD family. As to quaternary structure, homodimer.

Its subcellular location is the cytoplasm. It carries out the reaction guanosine(37) in tRNA + S-adenosyl-L-methionine = N(1)-methylguanosine(37) in tRNA + S-adenosyl-L-homocysteine + H(+). Its function is as follows. Specifically methylates guanosine-37 in various tRNAs. In Azobacteroides pseudotrichonymphae genomovar. CFP2, this protein is tRNA (guanine-N(1)-)-methyltransferase.